Here is a 189-residue protein sequence, read N- to C-terminus: uncharacterized protein (189 aa).

An N-terminal signal peptide occupies residues 1 to 19 (MNKLTILFLILALISVIYA). Positions 24-189 (PSSSEDSSSN…GSGSSGTVYY (166 aa)) are disordered. Residues 25–69 (SSSEDSSSNDSNSQVTGSQSYSGSQSDSNSGSESHTINTGSSYSG) are compositionally biased toward low complexity. A compositionally biased stretch (gly residues) spans 70–101 (SGSGSSGISGGSGSGSGSGSGSGSGSGSGSGA). The span at 102–142 (VSGSQSGSGAVSGSQSGSGAVSGSQSGVQTGSQSGAGSASG) shows a compositional bias: low complexity. The segment covering 144–157 (FTGNPSGSQSQEIN) has biased composition (polar residues). Over residues 165 to 183 (SGSGAPTGAATGSGSGSGS) the composition is skewed to gly residues.

This is an uncharacterized protein from Dictyostelium discoideum (Social amoeba).